The following is a 403-amino-acid chain: DNA primase DnaG (403 aa).

The Toprim domain occupies 172–248 (DSVIIVEGRA…HIDYIARAPP (77 aa)). Mg(2+) contacts are provided by Glu178, Asp222, and Asp224. A disordered region spans residues 279–300 (AAGEKTEAPAQPTQQQPPPAEA).

The protein belongs to the archaeal DnaG primase family. Forms a ternary complex with MCM helicase and DNA. Component of the archaeal exosome complex. Requires Mg(2+) as cofactor.

The catalysed reaction is ssDNA + n NTP = ssDNA/pppN(pN)n-1 hybrid + (n-1) diphosphate.. In terms of biological role, RNA polymerase that catalyzes the synthesis of short RNA molecules used as primers for DNA polymerase during DNA replication. Also part of the exosome, which is a complex involved in RNA degradation. Acts as a poly(A)-binding protein that enhances the interaction between heteromeric, adenine-rich transcripts and the exosome. In Pyrobaculum neutrophilum (strain DSM 2338 / JCM 9278 / NBRC 100436 / V24Sta) (Thermoproteus neutrophilus), this protein is DNA primase DnaG.